A 324-amino-acid polypeptide reads, in one-letter code: Heat-inducible transcription repressor HrcA (324 aa).

Belongs to the HrcA family.

Its function is as follows. Negative regulator of class I heat shock genes (grpE-dnaK-dnaJ and groELS operons). Prevents heat-shock induction of these operons. This is Heat-inducible transcription repressor HrcA from Parasynechococcus marenigrum (strain WH8102).